Reading from the N-terminus, the 436-residue chain is Prenyltransferase nscD (436 aa).

Belongs to the tryptophan dimethylallyltransferase family.

The protein operates within secondary metabolite biosynthesis. Prenyltransferase; part of the gene cluster that mediates the biosynthesis of neosartoricin B, a prenylated anthracenone that probably exhibits T-cell antiproliferative activity, suggestive of a physiological role as an immunosuppressive agent. The non-reducing polyketide synthase nscA probably synthesizes and cyclizes the decaketide backbone. The hydrolase nscB then mediates the product release through hydrolysis followed by spontaneous decarboxylation. The prenyltransferase nscD catalyzes the addition of the dimethylallyl group to the aromatic C5. The FAD-dependent monooxygenase nscC is then responsible for the stereospecific hydroxylation at C2. Neosartoricin B can be converted into two additional compounds neosartoricins C and D. Neosartoricin C is a spirocyclic compound that is cyclized through the attack of C3 hydroxyl on C14, followed by dehydration. On the other hand, neosartoricin D is a further cyclized compound in which attack of C2 on C14 in neosartoricin C results in the formation of the acetal-containing dioxabicyclo-octanone ring. Both of these compounds are novel and possibly represent related metabolites of the gene cluster. The chain is Prenyltransferase nscD from Arthroderma gypseum (strain ATCC MYA-4604 / CBS 118893) (Microsporum gypseum).